We begin with the raw amino-acid sequence, 503 residues long: MDLIPNFAMETWVLVATSLVLLYIYGTHSHKLFKKLGIPGPTPLPFLGTILFYLRGLWNFDRECNEKYGEMWGLYEGQQPMLVIMDPDMIKTVLVKECYSVFTNQMPLGPMGFLKSALSFAEDEEWKRIRTLLSPAFTSVKFKEMVPIISQCGDMLVRSLRQEAENSKSINLKDFFGAYTMDVITGTLFGVNLDSLNNPQDPFLKNMKKLLKLDFLDPFLLLISLFPFLTPVFEALNIGLFPKDVTHFLKNSIERMKESRLKDKQKHRVDFFQQMIDSQNSKETKSHKALSDLELVAQSIIIIFAAYDTTSTTLPFIMYELATHPDVQQKLQEEIDAVLPNKAPVTYDALVQMEYLDMVVNETLRLFPVVSRVTRVCKKDIEINGVFIPKGLAVMVPIYALHHDPKYWTEPEKFCPERFSKKNKDSIDLYRYIPFGAGPRNCIGMRFALTNIKLAVIRALQNFSFKPCKETQIPLKLDNLPILQPEKPIVLKVHLRDGITSGP.

C442 provides a ligand contact to heme.

The protein belongs to the cytochrome P450 family. Heme serves as cofactor. In terms of tissue distribution, highest expression level in prostate. Also expressed in liver, kidney, pancreas, fetal liver and fetal skeletal muscle.

It is found in the endoplasmic reticulum membrane. The protein localises to the microsome membrane. It catalyses the reaction an organic molecule + reduced [NADPH--hemoprotein reductase] + O2 = an alcohol + oxidized [NADPH--hemoprotein reductase] + H2O + H(+). In terms of biological role, exhibits low testosterone 6-beta-hydroxylase activity. The polypeptide is Cytochrome P450 3A43 (CYP3A43) (Homo sapiens (Human)).